A 101-amino-acid chain; its full sequence is MIPGEIMAAPGDITLNAGATPLTLTVSNTGDRPVQVGSHYHFAETNAGLSFDRDAARGMRLDIAAGTAVRFEPGQTRDITLVPFGGARKIYGFNQGIMGAL.

The protein belongs to the urease beta subunit family. As to quaternary structure, heterotrimer of UreA (gamma), UreB (beta) and UreC (alpha) subunits. Three heterotrimers associate to form the active enzyme.

Its subcellular location is the cytoplasm. It catalyses the reaction urea + 2 H2O + H(+) = hydrogencarbonate + 2 NH4(+). Its pathway is nitrogen metabolism; urea degradation; CO(2) and NH(3) from urea (urease route): step 1/1. This is Urease subunit beta from Dinoroseobacter shibae (strain DSM 16493 / NCIMB 14021 / DFL 12).